Reading from the N-terminus, the 98-residue chain is Large ribosomal subunit protein uL23 (98 aa).

Belongs to the universal ribosomal protein uL23 family. As to quaternary structure, part of the 50S ribosomal subunit. Contacts protein L29, and trigger factor when it is bound to the ribosome.

Its function is as follows. One of the early assembly proteins it binds 23S rRNA. One of the proteins that surrounds the polypeptide exit tunnel on the outside of the ribosome. Forms the main docking site for trigger factor binding to the ribosome. This Cereibacter sphaeroides (strain ATCC 17025 / ATH 2.4.3) (Rhodobacter sphaeroides) protein is Large ribosomal subunit protein uL23.